Reading from the N-terminus, the 256-residue chain is uncharacterized protein (256 aa).

29–36 (GDDHSGKT) provides a ligand contact to ATP.

This is an uncharacterized protein from Saccharomyces cerevisiae (strain ATCC 204508 / S288c) (Baker's yeast).